The following is a 91-amino-acid chain: MPRSIKKGPFIDEHLDRKVQSAQASNSRRPIKTWSRRSTITPDFIGLTISVHNGRQHIPVVVNENMVGHKLGEFALTRTFKGHVADKKAKR.

Positions 1–32 are disordered; it reads MPRSIKKGPFIDEHLDRKVQSAQASNSRRPIK. Basic and acidic residues predominate over residues 9–19; that stretch reads PFIDEHLDRKV.

This sequence belongs to the universal ribosomal protein uS19 family.

Protein S19 forms a complex with S13 that binds strongly to the 16S ribosomal RNA. The protein is Small ribosomal subunit protein uS19 of Acidithiobacillus ferrooxidans (strain ATCC 53993 / BNL-5-31) (Leptospirillum ferrooxidans (ATCC 53993)).